The following is a 499-amino-acid chain: Beta-amylase (499 aa).

The substrate site is built by Asp-55, His-95, and Asp-103. Catalysis depends on Glu-188, which acts as the Proton donor. Substrate contacts are provided by Lys-298, His-303, and Thr-345. Glu-383 (proton acceptor) is an active-site residue. Residues 384–385 (NA) and Arg-423 contribute to the substrate site.

Belongs to the glycosyl hydrolase 14 family. In terms of assembly, homotetramer.

It carries out the reaction Hydrolysis of (1-&gt;4)-alpha-D-glucosidic linkages in polysaccharides so as to remove successive maltose units from the non-reducing ends of the chains.. This chain is Beta-amylase (BMY1), found in Ipomoea batatas (Sweet potato).